A 299-amino-acid chain; its full sequence is Homoserine kinase (299 aa).

88–98 serves as a coordination point for ATP; the sequence is PLGRGLGSSAT.

This sequence belongs to the GHMP kinase family. Homoserine kinase subfamily.

It is found in the cytoplasm. The catalysed reaction is L-homoserine + ATP = O-phospho-L-homoserine + ADP + H(+). The protein operates within amino-acid biosynthesis; L-threonine biosynthesis; L-threonine from L-aspartate: step 4/5. Its function is as follows. Catalyzes the ATP-dependent phosphorylation of L-homoserine to L-homoserine phosphate. The polypeptide is Homoserine kinase (Gloeobacter violaceus (strain ATCC 29082 / PCC 7421)).